A 372-amino-acid polypeptide reads, in one-letter code: Glutamate 5-kinase (372 aa).

An ATP-binding site is contributed by K14. Residues S54, D141, and N153 each coordinate substrate. Residue 173 to 174 (TD) coordinates ATP. In terms of domain architecture, PUA spans 280–358 (RGHVVIDDGA…GEIESVLGYM (79 aa)).

Belongs to the glutamate 5-kinase family.

Its subcellular location is the cytoplasm. The catalysed reaction is L-glutamate + ATP = L-glutamyl 5-phosphate + ADP. It participates in amino-acid biosynthesis; L-proline biosynthesis; L-glutamate 5-semialdehyde from L-glutamate: step 1/2. Catalyzes the transfer of a phosphate group to glutamate to form L-glutamate 5-phosphate. This Paraburkholderia phytofirmans (strain DSM 17436 / LMG 22146 / PsJN) (Burkholderia phytofirmans) protein is Glutamate 5-kinase.